The sequence spans 141 residues: MTKVYANSIQQERVVDRIALLERCLDPSNSLPTAKRLVAVAVATILAVALLVVAGLLFSGVLCSPVSVLAASLFFGVGAFLLGGALVGGVLTTEAVTRERLHRSQTLMWNNLCCKTAEVEQKISTASANAKSNDKTRKLGE.

The next 2 helical transmembrane spans lie at valine 38–phenylalanine 58 and valine 68–glycine 88.

The protein resides in the secreted. It localises to the host vacuole. Its subcellular location is the host pathogen-containing vacuole. It is found in the host pathogen-containing vacuole membrane. Functionally, inclusion membrane protein probably involved in early modification events of the chlamydial inclusion. This Chlamydia trachomatis serovar D (strain ATCC VR-885 / DSM 19411 / UW-3/Cx) protein is Inclusion membrane protein D (incD).